Reading from the N-terminus, the 527-residue chain is Arginine--tRNA ligase (527 aa).

The short motif at 108-118 (ANPTGPLHIGH) is the 'HIGH' region element.

It belongs to the class-I aminoacyl-tRNA synthetase family. Monomer.

The protein localises to the cytoplasm. It carries out the reaction tRNA(Arg) + L-arginine + ATP = L-arginyl-tRNA(Arg) + AMP + diphosphate. The chain is Arginine--tRNA ligase from Sulfurimonas denitrificans (strain ATCC 33889 / DSM 1251) (Thiomicrospira denitrificans (strain ATCC 33889 / DSM 1251)).